Consider the following 307-residue polypeptide: Agmatinase (307 aa).

Mn(2+)-binding residues include His-128, Asp-151, His-153, Asp-155, Asp-232, and Asp-234.

Belongs to the arginase family. Agmatinase subfamily. Requires Mn(2+) as cofactor.

It carries out the reaction agmatine + H2O = urea + putrescine. It participates in amine and polyamine biosynthesis; putrescine biosynthesis via agmatine pathway; putrescine from agmatine: step 1/1. Functionally, catalyzes the formation of putrescine from agmatine. The sequence is that of Agmatinase from Neisseria meningitidis serogroup C (strain 053442).